Consider the following 140-residue polypeptide: Nucleoside diphosphate kinase (140 aa).

ATP-binding residues include Lys9, Phe57, Arg85, Thr91, Arg102, and Asn112. The active-site Pros-phosphohistidine intermediate is His115.

The protein belongs to the NDK family. As to quaternary structure, homotetramer. The cofactor is Mg(2+).

Its subcellular location is the cytoplasm. It catalyses the reaction a 2'-deoxyribonucleoside 5'-diphosphate + ATP = a 2'-deoxyribonucleoside 5'-triphosphate + ADP. The catalysed reaction is a ribonucleoside 5'-diphosphate + ATP = a ribonucleoside 5'-triphosphate + ADP. Its function is as follows. Major role in the synthesis of nucleoside triphosphates other than ATP. The ATP gamma phosphate is transferred to the NDP beta phosphate via a ping-pong mechanism, using a phosphorylated active-site intermediate. This is Nucleoside diphosphate kinase from Chlorobium limicola (strain DSM 245 / NBRC 103803 / 6330).